A 396-amino-acid chain; its full sequence is MDEEPERTKRWEGGYERTWEILKEDESGSLKATIEDILFKAKRKRVFEHHGQVRLGMMRHLYVVVDGSRTMEDQDLKPNRLTCTLKLLEYFVEEYFDQNPISQIGIIVTKSKRAEKLTELSGNPRKHITSLKKAVDMTCHGEPSLYNSLSMAMQTLKHMPGHTSREVLIIFSSLTTCDPSNIYDLIKTLKTAKIRVSVIGLSAEVRVCTVLARETGGTYHVILDETHYKELLARHVSPPPASSGSECSLIRMGFPQHTIASLSDQDAKPSFSMAHLDNNSTEPGLTLGGYFCPQCRAKYCELPVECKICGLTLVSAPHLARSYHHLFPLDAFQEIPLEEYKGERFCYGCQGELKDQHVYVCTVCRNVFCVDCDVFVHDSLHCCPGCVHKIPTQSGV.

The VWFA domain occupies 60-236 (HLYVVVDGSR…HYKELLARHV (177 aa)). Y95 is subject to Phosphotyrosine. The C4-type zinc-finger motif lies at 292–309 (CPQCRAKYCELPVECKIC).

This sequence belongs to the GTF2H2 family. In terms of assembly, component of the TFIID-containing RNA polymerase II pre-initiation complex that is composed of TBP and at least GTF2A1, GTF2A2, GTF2E1, GTF2E2, GTF2F1, GTF2H2, GTF2H3, GTF2H4, GTF2H5, GTF2B, TCEA1, ERCC2 and ERCC3. Component of the 7-subunit TFIIH core complex composed of XPB/ERCC3, XPD/ERCC2, GTF2H1, GTF2H2, GTF2H3, GTF2H4 and GTF2H5, which is active in NER. The core complex associates with the 3-subunit CDK-activating kinase (CAK) module composed of CCNH/cyclin H, CDK7 and MNAT1 to form the 10-subunit holoenzyme (holo-TFIIH) active in transcription. Interacts with XPB, XPD, GTF2H1 and GTF2H3.

It is found in the nucleus. Component of the general transcription and DNA repair factor IIH (TFIIH) core complex, which is involved in general and transcription-coupled nucleotide excision repair (NER) of damaged DNA and, when complexed to CAK, in RNA transcription by RNA polymerase II. In NER, TFIIH acts by opening DNA around the lesion to allow the excision of the damaged oligonucleotide and its replacement by a new DNA fragment. In transcription, TFIIH has an essential role in transcription initiation. When the pre-initiation complex (PIC) has been established, TFIIH is required for promoter opening and promoter escape. Phosphorylation of the C-terminal tail (CTD) of the largest subunit of RNA polymerase II by the kinase module CAK controls the initiation of transcription. The N-terminus of GTF2H2 interacts with and regulates XPD whereas an intact C-terminus is required for a successful escape of RNAP II form the promoter. This Rattus norvegicus (Rat) protein is General transcription factor IIH subunit 2 (Gtf2h2).